The chain runs to 490 residues: MLVSSSFASSIDSVMSHETMSLRRNPPFIDTPEKMPNPTASPNGTIHHLIDPSLPLLSSTTSSSRSTLSSTLNSPPPPPLTTSYSSYNSSACQSITSSPTDNTALAHNSKCYFPHSLSPTPLSSNSSSHVILPPISSFTNLITVAEREFNGRSNSLHANFTSPVPRTVLDHHRHELTFCNPNNTTGFKTITPSPPTQHQSILPTAVDNVPRSKSVSSLPVSGFPPLIVKQQQQQQLNSSSSASALPSIHSPLTNEHTSRYSSSLKDSAKITKQRKKKECPICHNFYANLSTHKSTHLTPEDRPHKCPICQRGFARNNDLIRHKKRHWKDEFMQIYARESDNNSGADDQDDTARTSANNDSDDSNDKLAASSSSEETKLLKKNQLKSLYKIKGAFKCPYNSTLINLDMEVYPHKSRSLYFEPINCHQTGVFSRCDTFKNHLKALHFEYPPKTKKEDRGVVPGKCKHCGLQFPNVDVWLNKHVGKGCGYSYH.

Low complexity-rich tracts occupy residues 1–16 (MLVS…SVMS) and 52–73 (PSLP…STLN). The segment at 1 to 85 (MLVSSSFASS…PPPPLTTSYS (85 aa)) is disordered. A phosphoserine mark is found at Ser153 and Ser155. Low complexity predominate over residues 231–247 (QQQQQLNSSSSASALPS). Residues 231-273 (QQQQQLNSSSSASALPSIHSPLTNEHTSRYSSSLKDSAKITKQ) form a disordered region. Polar residues predominate over residues 250–265 (SPLTNEHTSRYSSSLK). A C2H2-type zinc finger spans residues 304-326 (HKCPICQRGFARNNDLIRHKKRH). The disordered stretch occupies residues 338–375 (ESDNNSGADDQDDTARTSANNDSDDSNDKLAASSSSEE).

It is found in the cytoplasm. The protein localises to the mitochondrion. The protein resides in the nucleus. The protein is Zinc finger protein STP4 (STP4) of Saccharomyces cerevisiae (strain ATCC 204508 / S288c) (Baker's yeast).